A 350-amino-acid polypeptide reads, in one-letter code: tRNA uridine(34) hydroxylase (350 aa).

In terms of domain architecture, Rhodanese spans 146-240 (DDPDALFIDM…YARKAREQGL (95 aa)). C200 serves as the catalytic Cysteine persulfide intermediate.

Belongs to the TrhO family.

It catalyses the reaction uridine(34) in tRNA + AH2 + O2 = 5-hydroxyuridine(34) in tRNA + A + H2O. In terms of biological role, catalyzes oxygen-dependent 5-hydroxyuridine (ho5U) modification at position 34 in tRNAs, the first step in 5-carboxymethoxyuridine (cmo5U) biosynthesis. May be part of an alternate pathway, which is able to bypass cmo5U biogenesis in a subset of tRNAs under aerobic conditions. The polypeptide is tRNA uridine(34) hydroxylase (Escherichia coli (strain SMS-3-5 / SECEC)).